Consider the following 189-residue polypeptide: Interferon alpha-6 (189 aa).

Positions 1–20 are cleaved as a signal peptide; it reads MALPFALLMALVVLSCKSSC. 2 disulfide bridges follow: C24–C122 and C52–C162.

The protein belongs to the alpha/beta interferon family.

Its subcellular location is the secreted. Its function is as follows. Produced by macrophages, IFN-alpha have antiviral activities. Interferon stimulates the production of two enzymes: a protein kinase and an oligoadenylate synthetase. The chain is Interferon alpha-6 (IFNA6) from Homo sapiens (Human).